Reading from the N-terminus, the 588-residue chain is Outer membrane transporter CdiB (588 aa).

One can recognise a POTRA domain in the interval 104–179; that stretch reads FTVSSIVVSG…GVLHITVMEG (76 aa).

Belongs to the TPS (TC 1.B.20) family.

It is found in the cell outer membrane. In terms of biological role, potential outer membrane protein component of a toxin-immunity protein module, which functions as a cellular contact-dependent growth inhibition (CDI) system. CDI modules allow bacteria to communicate with and inhibit the growth of closely related neighboring bacteria in a contact-dependent fashion. This protein may be required for secretion and assembly of the CdiA toxin protein. Inhibitory cells must be in logarithmic (not stationary) phase to inhibit growth of their targets, while the presence of P or S but not type 1 pili protects the target cells against growth inhibition. Its function is as follows. Probable member of a two partner secretion pathway (TPS) in which it mediates the secretion of CdiA. The chain is Outer membrane transporter CdiB from Escherichia coli.